A 418-amino-acid chain; its full sequence is MQETIRNTFKSVRQASRELVMIGEQAINSILIDLAETIPDCSSSILEANRRDLDRMDPADPMFDRLLLNEKRLEIIAADIRNVATLPSPLDIVLEQRRLPNGLELKKITVPIGVIGIIYEARPNVTFDVFALCLKSGNATVLKGGSDAHESNTAIVECIKTVLRRNGINDNTLSLLPSEREAAGIMLNAVDSIDMIIPRGSQKLIDFVRQNAKVPVIETGAGIVHTYIDKNADTGIAAKVIFNAKTRRPSVCNALDTLLVHAAKLDDLPQITAPLQEKKVVIYADEAAYAKLQGSYPESLLERARPEHFGTEFLSLKLSVKTVSSIEEALDHIAEYSSRHSEAIITNDPEAKAEFLKRVDAAVVYANTSTAFTDGAQFGLGAEIGISTQKLHARGPMALKELTSYKWIIEGDGQTRSV.

The protein belongs to the gamma-glutamyl phosphate reductase family.

The protein localises to the cytoplasm. It carries out the reaction L-glutamate 5-semialdehyde + phosphate + NADP(+) = L-glutamyl 5-phosphate + NADPH + H(+). Its pathway is amino-acid biosynthesis; L-proline biosynthesis; L-glutamate 5-semialdehyde from L-glutamate: step 2/2. In terms of biological role, catalyzes the NADPH-dependent reduction of L-glutamate 5-phosphate into L-glutamate 5-semialdehyde and phosphate. The product spontaneously undergoes cyclization to form 1-pyrroline-5-carboxylate. This is Gamma-glutamyl phosphate reductase from Chlorobium limicola (strain DSM 245 / NBRC 103803 / 6330).